Here is a 662-residue protein sequence, read N- to C-terminus: Chaperone protein HtpG (662 aa).

The segment at 1–352 is a; substrate-binding; the sequence is MSKQTLSFQA…SADLPLNVSR (352 aa). The b stretch occupies residues 353-594; sequence ELLQESRDVR…GDGMSTQLAR (242 aa). The disordered stretch occupies residues 382–402; the sequence is HDRHDSPAPQPAEGADRVSDV. The tract at residues 595–662 is c; the sequence is LLKQAGQQAP…YVKRVNALLV (68 aa).

The protein belongs to the heat shock protein 90 family. As to quaternary structure, homodimer.

The protein resides in the cytoplasm. Its function is as follows. Molecular chaperone. Has ATPase activity. This Verminephrobacter eiseniae (strain EF01-2) protein is Chaperone protein HtpG.